Consider the following 102-residue polypeptide: NADH-quinone oxidoreductase subunit K (102 aa).

Transmembrane regions (helical) follow at residues 5-25 (ITHY…GIFL), 31-51 (IIIL…FVAF), and 66-86 (FILT…VVFF).

The protein belongs to the complex I subunit 4L family. In terms of assembly, NDH-1 is composed of 14 different subunits. Subunits NuoA, H, J, K, L, M, N constitute the membrane sector of the complex.

It is found in the cell inner membrane. It catalyses the reaction a quinone + NADH + 5 H(+)(in) = a quinol + NAD(+) + 4 H(+)(out). NDH-1 shuttles electrons from NADH, via FMN and iron-sulfur (Fe-S) centers, to quinones in the respiratory chain. The immediate electron acceptor for the enzyme in this species is believed to be ubiquinone. Couples the redox reaction to proton translocation (for every two electrons transferred, four hydrogen ions are translocated across the cytoplasmic membrane), and thus conserves the redox energy in a proton gradient. The protein is NADH-quinone oxidoreductase subunit K of Bartonella quintana (strain Toulouse) (Rochalimaea quintana).